A 754-amino-acid chain; its full sequence is DNA topoisomerase 4 subunit A (754 aa).

The region spanning 38–501 (LPHIGDGLKP…EARALSETEL (464 aa)) is the Topo IIA-type catalytic domain. Catalysis depends on Tyr127, which acts as the O-(5'-phospho-DNA)-tyrosine intermediate.

Belongs to the type II topoisomerase GyrA/ParC subunit family. ParC type 1 subfamily. Heterotetramer composed of ParC and ParE.

Its subcellular location is the cell membrane. The catalysed reaction is ATP-dependent breakage, passage and rejoining of double-stranded DNA.. Topoisomerase IV is essential for chromosome segregation. It relaxes supercoiled DNA. Performs the decatenation events required during the replication of a circular DNA molecule. The chain is DNA topoisomerase 4 subunit A from Pseudomonas aeruginosa (strain ATCC 15692 / DSM 22644 / CIP 104116 / JCM 14847 / LMG 12228 / 1C / PRS 101 / PAO1).